A 186-amino-acid chain; its full sequence is Elongation factor P (186 aa).

Residue Arg32 is glycosylated (N-alpha-linked (Rha) arginine).

This sequence belongs to the elongation factor P family. Glycosylated ar Arg-32 by EarP: arginine rhamnosylation is required for EF-P function and rescue of polyproline stalled ribosomes.

Its subcellular location is the cytoplasm. It functions in the pathway protein biosynthesis; polypeptide chain elongation. In terms of biological role, involved in peptide bond synthesis. Stimulates efficient translation and peptide-bond synthesis on native or reconstituted 70S ribosomes in vitro. Probably functions indirectly by altering the affinity of the ribosome for aminoacyl-tRNA, thus increasing their reactivity as acceptors for peptidyl transferase. The polypeptide is Elongation factor P (Shewanella oneidensis (strain ATCC 700550 / JCM 31522 / CIP 106686 / LMG 19005 / NCIMB 14063 / MR-1)).